The primary structure comprises 219 residues: Ribose-5-phosphate isomerase A (219 aa).

Substrate contacts are provided by residues 28 to 31, 81 to 84, and 94 to 97; these read TGST, DGAD, and KGGG. Glutamate 103 serves as the catalytic Proton acceptor. A substrate-binding site is contributed by lysine 121.

It belongs to the ribose 5-phosphate isomerase family. Homodimer.

The catalysed reaction is aldehydo-D-ribose 5-phosphate = D-ribulose 5-phosphate. The protein operates within carbohydrate degradation; pentose phosphate pathway; D-ribose 5-phosphate from D-ribulose 5-phosphate (non-oxidative stage): step 1/1. Catalyzes the reversible conversion of ribose-5-phosphate to ribulose 5-phosphate. This chain is Ribose-5-phosphate isomerase A, found in Salmonella choleraesuis (strain SC-B67).